A 215-amino-acid polypeptide reads, in one-letter code: 3-isopropylmalate dehydratase small subunit (215 aa).

It belongs to the LeuD family. LeuD type 1 subfamily. In terms of assembly, heterodimer of LeuC and LeuD.

It carries out the reaction (2R,3S)-3-isopropylmalate = (2S)-2-isopropylmalate. It functions in the pathway amino-acid biosynthesis; L-leucine biosynthesis; L-leucine from 3-methyl-2-oxobutanoate: step 2/4. Functionally, catalyzes the isomerization between 2-isopropylmalate and 3-isopropylmalate, via the formation of 2-isopropylmaleate. The sequence is that of 3-isopropylmalate dehydratase small subunit from Teredinibacter turnerae (strain ATCC 39867 / T7901).